A 163-amino-acid polypeptide reads, in one-letter code: MPSFDIVSEIDTQEVRNAVENATRDLSTRWDFRHVTARFEFDEKQKSIKVTSESDFQVKQMLEIISEKLAKRGIEGGALDISAEILHSGKTYSLDAKLKQGIESLKAKKLVKLIKDSKLKVQAQIQGEQVRVTGKSRNDLQAVMALIRTGDLGQPFQFNNFRD.

This sequence belongs to the YajQ family.

In terms of biological role, nucleotide-binding protein. The chain is Nucleotide-binding protein HDEF_1968 from Hamiltonella defensa subsp. Acyrthosiphon pisum (strain 5AT).